The primary structure comprises 266 residues: Killer cell lectin-like receptor 5 (266 aa).

The Cytoplasmic segment spans residues 1–44; it reads MSEPEVTYSTVRLHKSSGLQRLVSHEEIQGPGEAGYRKCSVPWQ. The helical; Signal-anchor for type II membrane protein transmembrane segment at 45-66 threads the bilayer; that stretch reads LTVRSLGIFCFLLLVTVAVLAV. Residues 67 to 266 lie on the Extracellular side of the membrane; the sequence is KIFQYSQHKQ…CGKKLDHFPG (200 aa). N-linked (GlcNAc...) asparagine glycosylation is found at Asn-87 and Asn-104. The C-type lectin domain occupies 143 to 261; the sequence is GVKHWFCYGT…SYFCICGKKL (119 aa). 4 disulfides stabilise this stretch: Cys-149/Cys-154, Cys-167/Cys-255, Cys-171/Cys-257, and Cys-236/Cys-249. An N-linked (GlcNAc...) asparagine glycan is attached at Asn-250.

As to quaternary structure, homodimer; disulfide-linked. Mostly expressed in NK cells, but also observed on NK T and memory T-cells.

Its subcellular location is the membrane. Functionally, receptor on natural killer (NK) cells for class I MHC. The chain is Killer cell lectin-like receptor 5 (Klra5) from Mus musculus (Mouse).